Here is a 96-residue protein sequence, read N- to C-terminus: Class I hydrophobin 3 (96 aa).

A signal peptide spans 1-18 (MQFAKIASVLAMAAAAVA). 4 disulfides stabilise this stretch: Cys-43–Cys-72, Cys-51–Cys-66, Cys-52–Cys-57, and Cys-73–Cys-92.

The protein belongs to the fungal hydrophobin family.

It is found in the secreted. Its subcellular location is the cell wall. Aerial growth, conidiation, and dispersal of filamentous fungi in the environment rely upon a capability of their secreting small amphipathic proteins called hydrophobins (HPBs) with low sequence identity. Class I can self-assemble into an outermost layer of rodlet bundles on aerial cell surfaces, conferring cellular hydrophobicity that supports fungal growth, development and dispersal; whereas Class II form highly ordered films at water-air interfaces through intermolecular interactions but contribute nothing to the rodlet structure. Does not seem to be important for the ability to cause seedling disease. The protein is Class I hydrophobin 3 of Gibberella moniliformis (Maize ear and stalk rot fungus).